A 322-amino-acid polypeptide reads, in one-letter code: Acetyl-coenzyme A carboxylase carboxyl transferase subunit alpha (322 aa).

The CoA carboxyltransferase C-terminal domain maps to 39–296; it reads DLTALKKQLI…HSKLVTELNY (258 aa).

The protein belongs to the AccA family. As to quaternary structure, acetyl-CoA carboxylase is a heterohexamer composed of biotin carboxyl carrier protein (accB), biotin carboxylase (accC) and two subunits each of ACCase subunit alpha (accA) and ACCase subunit beta (accD).

It localises to the plastid. The protein resides in the chloroplast. It catalyses the reaction N(6)-carboxybiotinyl-L-lysyl-[protein] + acetyl-CoA = N(6)-biotinyl-L-lysyl-[protein] + malonyl-CoA. The protein operates within lipid metabolism; malonyl-CoA biosynthesis; malonyl-CoA from acetyl-CoA: step 1/1. Component of the acetyl coenzyme A carboxylase (ACC) complex. First, biotin carboxylase catalyzes the carboxylation of biotin on its carrier protein (BCCP) and then the CO(2) group is transferred by the carboxyltransferase to acetyl-CoA to form malonyl-CoA. This chain is Acetyl-coenzyme A carboxylase carboxyl transferase subunit alpha, found in Antithamnion sp. (Red alga).